The chain runs to 473 residues: Ribulose bisphosphate carboxylase large chain (473 aa).

Positions 116 and 166 each coordinate substrate. The active-site Proton acceptor is lysine 168. Lysine 170 is a binding site for substrate. Mg(2+)-binding residues include lysine 194, aspartate 196, and glutamate 197. An N6-carboxylysine modification is found at lysine 194. The active-site Proton acceptor is the histidine 287. Substrate contacts are provided by arginine 288, histidine 320, and serine 372.

Belongs to the RuBisCO large chain family. Type I subfamily. In terms of assembly, heterohexadecamer of 8 large chains and 8 small chains. Mg(2+) is required as a cofactor.

The enzyme catalyses 2 (2R)-3-phosphoglycerate + 2 H(+) = D-ribulose 1,5-bisphosphate + CO2 + H2O. It catalyses the reaction D-ribulose 1,5-bisphosphate + O2 = 2-phosphoglycolate + (2R)-3-phosphoglycerate + 2 H(+). Its function is as follows. RuBisCO catalyzes two reactions: the carboxylation of D-ribulose 1,5-bisphosphate, the primary event in carbon dioxide fixation, as well as the oxidative fragmentation of the pentose substrate. Both reactions occur simultaneously and in competition at the same active site. This chain is Ribulose bisphosphate carboxylase large chain, found in Nitrobacter winogradskyi (Nitrobacter agilis).